We begin with the raw amino-acid sequence, 320 residues long: Glucokinase (320 aa).

It belongs to the ROK (NagC/XylR) family. As to quaternary structure, monomer. A divalent metal cation is required as a cofactor.

The enzyme catalyses D-glucose + ATP = D-glucose 6-phosphate + ADP + H(+). In terms of biological role, catalyzes the phosphorylation of D-glucose to D-glucose 6-phosphate using ATP as the phosphate donor. ITP can also serve as an effective phosphoryl donor. According to Hansen et al., the enzyme has a broad hexose specificity, and in addition to glucose, which shows the highest catalytic efficiency, it can also phosphorylate fructose, mannose, glucosamine, N-acetylglucosamine, N-acetylmannosamine and 2-deoxyglucose. However, according to Sakuraba et al., the enzyme shows strict specificity for D-glucose. The chain is Glucokinase from Aeropyrum pernix (strain ATCC 700893 / DSM 11879 / JCM 9820 / NBRC 100138 / K1).